A 330-amino-acid chain; its full sequence is Elongation factor Ts, mitochondrial (330 aa).

A mitochondrion-targeting transit peptide spans M1–Y16.

The protein belongs to the EF-Ts family.

The protein localises to the mitochondrion. Functionally, associates with the EF-Tu.GDP complex and induces the exchange of GDP to GTP. It remains bound to the aminoacyl-tRNA.EF-Tu.GTP complex up to the GTP hydrolysis stage on the ribosome. This chain is Elongation factor Ts, mitochondrial, found in Laccaria bicolor (strain S238N-H82 / ATCC MYA-4686) (Bicoloured deceiver).